An 876-amino-acid chain; its full sequence is Valine--tRNA ligase (876 aa).

A 'HIGH' region motif is present at residues 44 to 54 (PNVTGKLHLGH). A 'KMSKS' region motif is present at residues 520-524 (KMSKS). K523 lines the ATP pocket. A coiled-coil region spans residues 805 to 876 (LEGLIDMDKE…VKARIEQLKA (72 aa)).

Belongs to the class-I aminoacyl-tRNA synthetase family. ValS type 1 subfamily. In terms of assembly, monomer.

The protein resides in the cytoplasm. The catalysed reaction is tRNA(Val) + L-valine + ATP = L-valyl-tRNA(Val) + AMP + diphosphate. Its function is as follows. Catalyzes the attachment of valine to tRNA(Val). As ValRS can inadvertently accommodate and process structurally similar amino acids such as threonine, to avoid such errors, it has a 'posttransfer' editing activity that hydrolyzes mischarged Thr-tRNA(Val) in a tRNA-dependent manner. The sequence is that of Valine--tRNA ligase from Staphylococcus aureus (strain JH1).